A 252-amino-acid chain; its full sequence is Small ribosomal subunit protein uS2 (252 aa).

The protein belongs to the universal ribosomal protein uS2 family.

In Ruminiclostridium cellulolyticum (strain ATCC 35319 / DSM 5812 / JCM 6584 / H10) (Clostridium cellulolyticum), this protein is Small ribosomal subunit protein uS2.